The chain runs to 502 residues: Probable cytosol aminopeptidase (502 aa).

2 residues coordinate Mn(2+): Lys-269 and Asp-274. Lys-281 is a catalytic residue. Mn(2+) is bound by residues Asp-292, Asp-351, and Glu-353. The active site involves Arg-355.

Belongs to the peptidase M17 family. The cofactor is Mn(2+).

The protein resides in the cytoplasm. The catalysed reaction is Release of an N-terminal amino acid, Xaa-|-Yaa-, in which Xaa is preferably Leu, but may be other amino acids including Pro although not Arg or Lys, and Yaa may be Pro. Amino acid amides and methyl esters are also readily hydrolyzed, but rates on arylamides are exceedingly low.. It carries out the reaction Release of an N-terminal amino acid, preferentially leucine, but not glutamic or aspartic acids.. Its function is as follows. Presumably involved in the processing and regular turnover of intracellular proteins. Catalyzes the removal of unsubstituted N-terminal amino acids from various peptides. The sequence is that of Probable cytosol aminopeptidase from Photobacterium profundum (strain SS9).